A 264-amino-acid polypeptide reads, in one-letter code: Fructose-1,6-bisphosphatase/inositol-1-monophosphatase (264 aa).

The Mg(2+) site is built by Glu-70, Asp-86, Leu-88, and Asp-89. Substrate is bound by residues 89–91 (DGT), Arg-185, and Ala-190. Asp-214 serves as a coordination point for Mg(2+).

Belongs to the inositol monophosphatase superfamily. FBPase class 4 family. Mg(2+) serves as cofactor.

The enzyme catalyses beta-D-fructose 1,6-bisphosphate + H2O = beta-D-fructose 6-phosphate + phosphate. The catalysed reaction is a myo-inositol phosphate + H2O = myo-inositol + phosphate. Its function is as follows. Phosphatase with broad specificity; it can dephosphorylate fructose 1,6-bisphosphate, and both D and L isomers of inositol-1-phosphate (I-1-P). This Aquifex aeolicus (strain VF5) protein is Fructose-1,6-bisphosphatase/inositol-1-monophosphatase (suhB).